Here is a 159-residue protein sequence, read N- to C-terminus: SsrA-binding protein (159 aa).

It belongs to the SmpB family.

It is found in the cytoplasm. Required for rescue of stalled ribosomes mediated by trans-translation. Binds to transfer-messenger RNA (tmRNA), required for stable association of tmRNA with ribosomes. tmRNA and SmpB together mimic tRNA shape, replacing the anticodon stem-loop with SmpB. tmRNA is encoded by the ssrA gene; the 2 termini fold to resemble tRNA(Ala) and it encodes a 'tag peptide', a short internal open reading frame. During trans-translation Ala-aminoacylated tmRNA acts like a tRNA, entering the A-site of stalled ribosomes, displacing the stalled mRNA. The ribosome then switches to translate the ORF on the tmRNA; the nascent peptide is terminated with the 'tag peptide' encoded by the tmRNA and targeted for degradation. The ribosome is freed to recommence translation, which seems to be the essential function of trans-translation. This Coxiella burnetii (strain CbuK_Q154) (Coxiella burnetii (strain Q154)) protein is SsrA-binding protein.